Consider the following 329-residue polypeptide: Acetyl-coenzyme A carboxylase carboxyl transferase subunit alpha (329 aa).

Positions 40-294 (QLESLASRRR…RAALERHLGE (255 aa)) constitute a CoA carboxyltransferase C-terminal domain.

The protein belongs to the AccA family. As to quaternary structure, acetyl-CoA carboxylase is a heterohexamer composed of biotin carboxyl carrier protein (AccB), biotin carboxylase (AccC) and two subunits each of ACCase subunit alpha (AccA) and ACCase subunit beta (AccD).

The protein resides in the cytoplasm. The enzyme catalyses N(6)-carboxybiotinyl-L-lysyl-[protein] + acetyl-CoA = N(6)-biotinyl-L-lysyl-[protein] + malonyl-CoA. The protein operates within lipid metabolism; malonyl-CoA biosynthesis; malonyl-CoA from acetyl-CoA: step 1/1. In terms of biological role, component of the acetyl coenzyme A carboxylase (ACC) complex. First, biotin carboxylase catalyzes the carboxylation of biotin on its carrier protein (BCCP) and then the CO(2) group is transferred by the carboxyltransferase to acetyl-CoA to form malonyl-CoA. The protein is Acetyl-coenzyme A carboxylase carboxyl transferase subunit alpha of Synechococcus sp. (strain CC9902).